Here is a 195-residue protein sequence, read N- to C-terminus: ATP-dependent Clp protease proteolytic subunit 1 (195 aa).

Ser-96 acts as the Nucleophile in catalysis. Residue His-121 is part of the active site.

Belongs to the peptidase S14 family. Fourteen ClpP subunits assemble into 2 heptameric rings which stack back to back to give a disk-like structure with a central cavity, resembling the structure of eukaryotic proteasomes.

Its subcellular location is the cytoplasm. The enzyme catalyses Hydrolysis of proteins to small peptides in the presence of ATP and magnesium. alpha-casein is the usual test substrate. In the absence of ATP, only oligopeptides shorter than five residues are hydrolyzed (such as succinyl-Leu-Tyr-|-NHMec, and Leu-Tyr-Leu-|-Tyr-Trp, in which cleavage of the -Tyr-|-Leu- and -Tyr-|-Trp bonds also occurs).. Its function is as follows. Cleaves peptides in various proteins in a process that requires ATP hydrolysis. Has a chymotrypsin-like activity. Plays a major role in the degradation of misfolded proteins. The protein is ATP-dependent Clp protease proteolytic subunit 1 of Prochlorococcus marinus (strain MIT 9312).